Reading from the N-terminus, the 163-residue chain is Nucleotide-binding protein GK0742 (163 aa).

It belongs to the YajQ family.

Its function is as follows. Nucleotide-binding protein. The protein is Nucleotide-binding protein GK0742 of Geobacillus kaustophilus (strain HTA426).